A 33-amino-acid chain; its full sequence is Brevinin-2GRb (33 aa).

As to expression, expressed by the skin glands.

It is found in the secreted. In terms of biological role, antimicrobial peptide active against the Gram-positive bacterium S.aureus (MIC=25 uM) and against the Gram-negative bacteria E.coli (MIC=6 uM). Has no antifungal activity against C.albicans. Shows hemolytic activity against human erythrocytes only at high concentrations (LC(50)=180 uM). This is Brevinin-2GRb from Odorrana grahami (Yunnanfu frog).